Here is a 265-residue protein sequence, read N- to C-terminus: Sarcotoxin II-1 (265 aa).

A signal peptide spans 1 to 22 (MKSFVLFAACMAIIALGSLAHA). The propeptide at 23-24 (YP) is removed by a dipeptidylpeptidase. Position 25 is a pyrrolidone carboxylic acid (Q25). A Glycine amide modification is found at G264.

Belongs to the attacin/sarcotoxin-2 family. As to expression, synthesized by the fat body and is eventually secreted into the hemolymph.

The protein localises to the secreted. Functionally, sarcotoxin II is an antibacterial protein which plays a role in the inflammatory response of this insect. The main effect of sarcotoxin II on E.coli may be the inhibition of cell wall synthesis, including septum formation. This Sarcophaga peregrina (Flesh fly) protein is Sarcotoxin II-1.